A 165-amino-acid polypeptide reads, in one-letter code: UPF0303 protein Bxeno_A1932 (165 aa).

Belongs to the UPF0303 family.

This chain is UPF0303 protein Bxeno_A1932, found in Paraburkholderia xenovorans (strain LB400).